The following is a 374-amino-acid chain: Glutamate 5-kinase (374 aa).

Lys-16 contributes to the ATP binding site. Ser-56, Asp-143, and Asn-155 together coordinate substrate. Position 175–176 (175–176) interacts with ATP; that stretch reads TD. In terms of domain architecture, PUA spans 282 to 360; the sequence is RGRVVLDAGA…SEIEAVLGYV (79 aa).

This sequence belongs to the glutamate 5-kinase family.

It localises to the cytoplasm. It catalyses the reaction L-glutamate + ATP = L-glutamyl 5-phosphate + ADP. It functions in the pathway amino-acid biosynthesis; L-proline biosynthesis; L-glutamate 5-semialdehyde from L-glutamate: step 1/2. Its function is as follows. Catalyzes the transfer of a phosphate group to glutamate to form L-glutamate 5-phosphate. This Ralstonia nicotianae (strain ATCC BAA-1114 / GMI1000) (Ralstonia solanacearum) protein is Glutamate 5-kinase.